The primary structure comprises 101 residues: Ubiquitin-related modifier 1 homolog (101 aa).

1-thioglycine is present on glycine 101. A Glycyl lysine isopeptide (Gly-Lys) (interchain with K-? in acceptor proteins) cross-link involves residue glycine 101.

It belongs to the URM1 family. As to quaternary structure, interacts with cer. Post-translationally, C-terminal thiocarboxylation occurs in 2 steps, it is first acyl-adenylated (-COAMP) via the hesA/moeB/thiF part of the MOCS3 homolog, then thiocarboxylated (-COSH) via the rhodanese domain of the MOCS3 homolog.

It is found in the cytoplasm. It participates in tRNA modification; 5-methoxycarbonylmethyl-2-thiouridine-tRNA biosynthesis. Acts as a sulfur carrier required for 2-thiolation of mcm(5)S(2)U at tRNA wobble positions of cytosolic tRNA(Lys), tRNA(Glu) and tRNA(Gln). Serves as sulfur donor in tRNA 2-thiolation reaction by being thiocarboxylated (-COSH) at its C-terminus by MOCS3. The sulfur is then transferred to tRNA to form 2-thiolation of mcm(5)S(2)U. Also acts as a ubiquitin-like protein (UBL) that is covalently conjugated via an isopeptide bond to lysine residues of target proteins such as Prx2/Jafrac1, Ciao1, Eip71CD and GILT1. The thiocarboxylated form serves as substrate for conjugation and oxidative stress specifically induces the formation of UBL-protein conjugates. This chain is Ubiquitin-related modifier 1 homolog, found in Drosophila yakuba (Fruit fly).